A 302-amino-acid chain; its full sequence is Acetylglutamate kinase (302 aa).

Residues 55 to 56, R77, and N176 contribute to the substrate site; that span reads GG.

The protein belongs to the acetylglutamate kinase family. ArgB subfamily.

It is found in the cytoplasm. The catalysed reaction is N-acetyl-L-glutamate + ATP = N-acetyl-L-glutamyl 5-phosphate + ADP. It participates in amino-acid biosynthesis; L-arginine biosynthesis; N(2)-acetyl-L-ornithine from L-glutamate: step 2/4. In terms of biological role, catalyzes the ATP-dependent phosphorylation of N-acetyl-L-glutamate. This chain is Acetylglutamate kinase, found in Corynebacterium efficiens (strain DSM 44549 / YS-314 / AJ 12310 / JCM 11189 / NBRC 100395).